Reading from the N-terminus, the 446-residue chain is Divalent metal cation transporter MntH (446 aa).

Transmembrane regions (helical) follow at residues 32–52 (LAFL…GNWI), 59–79 (AQFG…AMLL), 107–127 (AIIF…AEVI), 139–159 (IPLI…LFIM), 168–188 (AIVG…VYIS), 205–225 (IIAN…TIMP), 264–284 (SIAF…FYGV), 303–323 (PVLG…ALLA), 355–375 (LVTR…FRGN), 381–401 (QLLV…LIPL), and 420–440 (VNIC…YLII).

This sequence belongs to the NRAMP family.

Its subcellular location is the cell membrane. In terms of biological role, h(+)-stimulated, divalent metal cation uptake system. This is Divalent metal cation transporter MntH from Staphylococcus haemolyticus (strain JCSC1435).